A 73-amino-acid polypeptide reads, in one-letter code: Translation initiation factor IF-1 (73 aa).

The region spanning 1-73 is the S1-like domain; that stretch reads MAKKDGVIEI…NRGRIVYRYR (73 aa).

This sequence belongs to the IF-1 family. As to quaternary structure, component of the 30S ribosomal translation pre-initiation complex which assembles on the 30S ribosome in the order IF-2 and IF-3, IF-1 and N-formylmethionyl-tRNA(fMet); mRNA recruitment can occur at any time during PIC assembly.

It is found in the cytoplasm. Its function is as follows. One of the essential components for the initiation of protein synthesis. Stabilizes the binding of IF-2 and IF-3 on the 30S subunit to which N-formylmethionyl-tRNA(fMet) subsequently binds. Helps modulate mRNA selection, yielding the 30S pre-initiation complex (PIC). Upon addition of the 50S ribosomal subunit IF-1, IF-2 and IF-3 are released leaving the mature 70S translation initiation complex. This chain is Translation initiation factor IF-1, found in Acidothermus cellulolyticus (strain ATCC 43068 / DSM 8971 / 11B).